The following is a 147-amino-acid chain: Large ribosomal subunit protein uL13 (147 aa).

Belongs to the universal ribosomal protein uL13 family. Part of the 50S ribosomal subunit.

In terms of biological role, this protein is one of the early assembly proteins of the 50S ribosomal subunit, although it is not seen to bind rRNA by itself. It is important during the early stages of 50S assembly. This chain is Large ribosomal subunit protein uL13, found in Leuconostoc mesenteroides subsp. mesenteroides (strain ATCC 8293 / DSM 20343 / BCRC 11652 / CCM 1803 / JCM 6124 / NCDO 523 / NBRC 100496 / NCIMB 8023 / NCTC 12954 / NRRL B-1118 / 37Y).